The chain runs to 382 residues: Alkanesulfonate monooxygenase (382 aa).

This sequence belongs to the SsuD family.

It carries out the reaction an alkanesulfonate + FMNH2 + O2 = an aldehyde + FMN + sulfite + H2O + 2 H(+). Its function is as follows. Catalyzes the desulfonation of aliphatic sulfonates. This Pseudomonas sp protein is Alkanesulfonate monooxygenase.